The sequence spans 73 residues: Conotoxin CnIIIF (73 aa).

A signal peptide spans 1 to 19 (MSKLGVLLTICLLLFPLTA). The propeptide occupies 20-51 (LPMDGDQSVDRPAERMQDDISSGQHPLFNQKR). 3 disulfides stabilise this stretch: C53-C72, C54-C70, and C60-C73.

Belongs to the conotoxin M superfamily. As to expression, expressed by the venom duct.

Its subcellular location is the secreted. Its function is as follows. Shows a paralytic effect in fish. The chain is Conotoxin CnIIIF from Conus consors (Singed cone).